The sequence spans 410 residues: MIRSLLRSFETALKLHAGLNMHPMHCSRRLLFSQYENRASPSRLTSSGTLGSNEAENDYVPYRQDRETGTKTRVLLEALRERFRFTDAELQKIISDELVHRCYRGRSLTLVMDTLQLEGVSRRSFVEYPWLLSLDNKRLELKMQLLKSMDFKDINHFVPFLRLTVPRLRKLVGALNSERDAMPQRNRVYYISEKLDVSPDIVSKYLSKRLFILEMPFEMFEKNLQHMIDYNVSPINVLKDLWAFRYTPKSVQLRLERAKRAKKDKIMPWMVRCPEPILQRSLKLSLDELKVLGEFSSVVEYLAHRLGFSTSEAKAIMDKHPQVHTVRVTKIKEVLDYLLDEAQFTRFEVAQNPRILCHSLKTTKERMEELKSHGCRPSSLVILCRSRREYDKFLQNWISHERNPQSVSEG.

A mitochondrion-targeting transit peptide spans 1 to 44 (MIRSLLRSFETALKLHAGLNMHPMHCSRRLLFSQYENRASPSRL).

Belongs to the mTERF family.

The protein localises to the mitochondrion. Transcription termination factor. Binds promoter DNA and regulates mitochondrial replication and transcription. Transcription termination activity may be polarized with highest termination activity occurring when its DNA-binding site is positioned in the reverse orientation with respect to the incoming RNA polymerase. Required for normal topology and maintenance of mitochondrial DNA (mtDNA) levels. Regulates mtDNA replication by promoting replication pausing, possibly by acting as a natural barrier to replication fork progression. Its function in replication pausing prevents unregulated replication that may occur for example by collisions between the machineries of DNA replication and transcription during mtDNA synthesis. This ensures the incorporation of RNA transcripts into replication intermediates at the replication fork and allow for proper fork progression. Shares mtDNA binding sites with the mitochondrial termination factor mTerf5 and thereby may antagonize mTerf5 function during replication to regulate pausing. Likely to function downstream of Dref which activates genes involved in mtDNA replication and maintenance. This is Transcription termination factor, mitochondrial from Drosophila melanogaster (Fruit fly).